The chain runs to 420 residues: MSLLNTPLHELDPDVAAAVDAELNRQQSTLEMIASENFAPVAVMEAQGSVLTNKYAEGYPGRRYYGGCEHVDVVEQIAIDRVKELFGAEHANVQPHSGAQANAAAMFALLKPGDTIMGLNLAHGGHLTHGMKINFSGKLYNVVAYHVDETTGQVDMAEVEKLAKESRPKLIVAGWSAYPRQLDFAAFRRIADEVGAYLMVDMAHFAGLVAAGLHPNPVPHAHVVTTTTHKTLGGPRGGVILSTAELAKKINSAVFPGQQGGPLEHVIAAKAVSFKVAASDDFKERQQRTLDGARILAERLVRDDVKAVGVDVLSGGTDVHLVLVDLRDSELDGQQAEDRLHEVGITVNRNAIPNDPRPPMVTSGLRIGTPALATRGFQAADFTEVADIIAEALKPSYDADALKARVTALADKHPLYPGLK.

Residues leucine 121 and 125 to 127 (GHL) each bind (6S)-5,6,7,8-tetrahydrofolate. N6-(pyridoxal phosphate)lysine is present on lysine 230.

The protein belongs to the SHMT family. In terms of assembly, homodimer. Pyridoxal 5'-phosphate serves as cofactor.

It localises to the cytoplasm. The catalysed reaction is (6R)-5,10-methylene-5,6,7,8-tetrahydrofolate + glycine + H2O = (6S)-5,6,7,8-tetrahydrofolate + L-serine. Its pathway is one-carbon metabolism; tetrahydrofolate interconversion. It participates in amino-acid biosynthesis; glycine biosynthesis; glycine from L-serine: step 1/1. Catalyzes the reversible interconversion of serine and glycine with tetrahydrofolate (THF) serving as the one-carbon carrier. This reaction serves as the major source of one-carbon groups required for the biosynthesis of purines, thymidylate, methionine, and other important biomolecules. Also exhibits THF-independent aldolase activity toward beta-hydroxyamino acids, producing glycine and aldehydes, via a retro-aldol mechanism. The sequence is that of Serine hydroxymethyltransferase from Streptomyces avermitilis (strain ATCC 31267 / DSM 46492 / JCM 5070 / NBRC 14893 / NCIMB 12804 / NRRL 8165 / MA-4680).